The chain runs to 122 residues: uncharacterized protein (122 aa).

A helical membrane pass occupies residues 93–113; that stretch reads ILRICIVFLSLKIYTLTLVII.

It is found in the membrane. This is an uncharacterized protein from Saccharomyces cerevisiae (strain ATCC 204508 / S288c) (Baker's yeast).